The sequence spans 620 residues: Apoptosis regulator MC163R (620 aa).

A helical transmembrane segment spans residues 113-133; the sequence is APLPLLLLPLLLPPMILLFFL.

The protein resides in the host mitochondrion. It localises to the host membrane. Its function is as follows. Plays a role in the inhibition of host apoptosis. Prevents host TNF-alpha-induced mitochondrial membrane permeabilization and reduces caspase-3/CASP3 and PARP1 cleavage induced by the intrinsic apoptotic pathway. In Homo sapiens (Human), this protein is Apoptosis regulator MC163R (MC163R).